The following is a 602-amino-acid chain: 4-hydroxy-3-methylbut-2-en-1-yl diphosphate synthase (flavodoxin) (602 aa).

4 residues coordinate [4Fe-4S] cluster: cysteine 508, cysteine 511, cysteine 543, and glutamate 550.

The protein belongs to the IspG family. It depends on [4Fe-4S] cluster as a cofactor.

It carries out the reaction (2E)-4-hydroxy-3-methylbut-2-enyl diphosphate + oxidized [flavodoxin] + H2O + 2 H(+) = 2-C-methyl-D-erythritol 2,4-cyclic diphosphate + reduced [flavodoxin]. Its pathway is isoprenoid biosynthesis; isopentenyl diphosphate biosynthesis via DXP pathway; isopentenyl diphosphate from 1-deoxy-D-xylulose 5-phosphate: step 5/6. In terms of biological role, converts 2C-methyl-D-erythritol 2,4-cyclodiphosphate (ME-2,4cPP) into 1-hydroxy-2-methyl-2-(E)-butenyl 4-diphosphate. In Chlamydia trachomatis serovar L2 (strain ATCC VR-902B / DSM 19102 / 434/Bu), this protein is 4-hydroxy-3-methylbut-2-en-1-yl diphosphate synthase (flavodoxin).